Consider the following 125-residue polypeptide: Protein ApaG (125 aa).

The ApaG domain occupies 3–125 (TAVTEGIEVT…FPLVVPGSLN (123 aa)).

This Anaeromyxobacter dehalogenans (strain 2CP-1 / ATCC BAA-258) protein is Protein ApaG.